We begin with the raw amino-acid sequence, 333 residues long: Ketoreductase sphI (333 aa).

Tyr-167 is a binding site for NADP(+).

It belongs to the NAD(P)-dependent epimerase/dehydratase family. Dihydroflavonol-4-reductase subfamily.

Functionally, ketoreductase; part of the gene cluster that mediates the biosynthesis of sphingofungins, bioactive molecules acting as sphingolipid inhibitors via inhibiting serine palmitoyl transferase (SPT). Does not seem to be involved in any biosynthetic process leading to the production of sphingofungins, but might be connected to a regulation or resistance mechanism. The sequence is that of Ketoreductase sphI from Aspergillus fumigatus (strain CBS 144.89 / FGSC A1163 / CEA10) (Neosartorya fumigata).